A 278-amino-acid chain; its full sequence is MEFSGTHQAFRNRWAKTDDEMCKHSMSFHLHKTLRKEFFASYLYLLEQIPLVKLYALTCEYIKGEKQFYYRAQNFYKDVPPSEEGMMGDFVEISDIDLEGSRQFLKKFVGPGKAGTKCALDCGCGIGRVSKGVLFPVFESMEMLDMMEEFILHAHECYLGDYADRVESYYLYNLQEFIPPRKKYDVIWMQWVACHLTDKDLMEFLMRAKESLRPNGVIIIKDNMARQGCKLDPIDSSIIRHLDIMNGIIQRAGLNILDVEKQEGFPEAIVPVWMIAMR.

S-adenosyl-L-methionine contacts are provided by residues Gly-123, Arg-128, Asp-145, Leu-174 to Gln-175, Gln-190, and His-195.

This sequence belongs to the methyltransferase superfamily. NTM1 family.

It localises to the nucleus. The catalysed reaction is N-terminal L-alanyl-L-prolyl-L-lysyl-[protein] + S-adenosyl-L-methionine = N-terminal N-methyl-L-alanyl-L-prolyl-L-lysyl-[protein] + S-adenosyl-L-homocysteine + H(+). It catalyses the reaction N-terminal L-prolyl-L-prolyl-L-lysyl-[protein] + S-adenosyl-L-methionine = N-terminal N-methyl-L-prolyl-L-prolyl-L-lysyl-[protein] + S-adenosyl-L-homocysteine + H(+). It carries out the reaction N-terminal L-seryl-L-prolyl-L-lysyl-[protein] + S-adenosyl-L-methionine = N-terminal N-methyl-L-seryl-L-prolyl-L-lysyl-[protein] + S-adenosyl-L-homocysteine + H(+). Alpha N-methyltransferase that methylates the N-terminus of target proteins containing the N-terminal motif [Ala/Pro/Ser]-Pro-Lys when the initiator Met is cleaved. Specifically catalyzes monomethylation of exposed alpha-amino group of Ala or Ser residue in the [Ala/Ser]-Pro-Lys motif and Pro in the Pro-Pro-Lys motif. Predominantly functions as a mono-methyltransferase but is also able to di-/tri-methylate the GPKRIA peptide and di-methylate the PPKRIA peptide (in vitro). May activate NTMT1 by priming its substrates for trimethylation. The sequence is that of N-terminal Xaa-Pro-Lys N-methyltransferase 2 (ntmt2) from Danio rerio (Zebrafish).